Consider the following 500-residue polypeptide: Probable E3 ubiquitin-protein ligase ARI16 (500 aa).

Residues 74-288 are TRIAD supradomain; sequence NSNSSSADRE…QGNWNCSPVA (215 aa). Residues 78-130 form an RING-type 1 zinc finger; sequence SSADRETGDGDYLVSTPFCSHKFSTTCWSEYLSDALKKNKEQRGLISCLSQDC. Zn(2+)-binding residues include cysteine 96, histidine 98, cysteine 125, cysteine 130, cysteine 169, cysteine 174, cysteine 194, cysteine 196, cysteine 201, cysteine 204, histidine 209, cysteine 214, cysteine 241, cysteine 244, cysteine 261, cysteine 263, cysteine 268, cysteine 271, histidine 278, and cysteine 284. The IBR-type zinc-finger motif lies at 148 to 214; that stretch reads EMYENYILES…GLESHRPVSC (67 aa). The segment at 241-271 adopts an RING-type 2; atypical zinc-finger fold; the sequence is CPKCKIPVQQNGDPNYRLINCICSNNFCWIC. The segment at 453–483 adopts a RanBP2-type zinc-finger fold; sequence EPGSRWFCDRCTFENSWVDKQCKMCFFPLDY.

Belongs to the RBR family. Ariadne subfamily. It depends on Zn(2+) as a cofactor. In terms of tissue distribution, preferentially expressed in green siliques.

The enzyme catalyses [E2 ubiquitin-conjugating enzyme]-S-ubiquitinyl-L-cysteine + [acceptor protein]-L-lysine = [E2 ubiquitin-conjugating enzyme]-L-cysteine + [acceptor protein]-N(6)-ubiquitinyl-L-lysine.. Its pathway is protein modification; protein ubiquitination. Its function is as follows. Might act as an E3 ubiquitin-protein ligase, or as part of E3 complex, which accepts ubiquitin from specific E2 ubiquitin-conjugating enzymes and then transfers it to substrates. In Arabidopsis thaliana (Mouse-ear cress), this protein is Probable E3 ubiquitin-protein ligase ARI16 (ARI16).